The primary structure comprises 148 residues: Large ribosomal subunit protein uL15 (148 aa).

Positions 1 to 51 are disordered; it reads MNLSSLKPAEGAVKSRKRIGRGPGSGLGGTSTRGHKGAKSRSGYSKKIGFE. Gly residues predominate over residues 21–31; the sequence is RGPGSGLGGTS.

The protein belongs to the universal ribosomal protein uL15 family. In terms of assembly, part of the 50S ribosomal subunit.

Functionally, binds to the 23S rRNA. The protein is Large ribosomal subunit protein uL15 of Porphyromonas gingivalis (strain ATCC BAA-308 / W83).